A 350-amino-acid polypeptide reads, in one-letter code: tRNA uridine(34) hydroxylase (350 aa).

The Rhodanese domain maps to 146–240 (DDPDALFIDM…YARKAREQGL (95 aa)). Catalysis depends on C200, which acts as the Cysteine persulfide intermediate.

This sequence belongs to the TrhO family.

It catalyses the reaction uridine(34) in tRNA + AH2 + O2 = 5-hydroxyuridine(34) in tRNA + A + H2O. In terms of biological role, catalyzes oxygen-dependent 5-hydroxyuridine (ho5U) modification at position 34 in tRNAs, the first step in 5-carboxymethoxyuridine (cmo5U) biosynthesis. May be part of an alternate pathway, which is able to bypass cmo5U biogenesis in a subset of tRNAs under aerobic conditions. The polypeptide is tRNA uridine(34) hydroxylase (Escherichia coli (strain SMS-3-5 / SECEC)).